The chain runs to 158 residues: Transcription elongation factor GreB (158 aa).

Residues 53-75 adopt a coiled-coil conformation; it reads KRRLREIDRRVRFLTKRLEVLQI.

This sequence belongs to the GreA/GreB family. GreB subfamily.

In terms of biological role, necessary for efficient RNA polymerase transcription elongation past template-encoded arresting sites. The arresting sites in DNA have the property of trapping a certain fraction of elongating RNA polymerases that pass through, resulting in locked ternary complexes. Cleavage of the nascent transcript by cleavage factors such as GreA or GreB allows the resumption of elongation from the new 3'terminus. GreB releases sequences of up to 9 nucleotides in length. The polypeptide is Transcription elongation factor GreB (Pasteurella multocida (strain Pm70)).